A 121-amino-acid polypeptide reads, in one-letter code: NADH-quinone oxidoreductase subunit A 2 (121 aa).

Transmembrane regions (helical) follow at residues 6-26 (FLPV…TLFV), 60-80 (VPFF…MFLF), and 89-109 (IGFV…VGFA).

The protein belongs to the complex I subunit 3 family. In terms of assembly, NDH-1 is composed of 14 different subunits. Subunits NuoA, H, J, K, L, M, N constitute the membrane sector of the complex.

The protein resides in the cell inner membrane. The catalysed reaction is a quinone + NADH + 5 H(+)(in) = a quinol + NAD(+) + 4 H(+)(out). In terms of biological role, NDH-1 shuttles electrons from NADH, via FMN and iron-sulfur (Fe-S) centers, to quinones in the respiratory chain. The immediate electron acceptor for the enzyme in this species is believed to be ubiquinone. Couples the redox reaction to proton translocation (for every two electrons transferred, four hydrogen ions are translocated across the cytoplasmic membrane), and thus conserves the redox energy in a proton gradient. The polypeptide is NADH-quinone oxidoreductase subunit A 2 (Rhizobium meliloti (strain 1021) (Ensifer meliloti)).